A 217-amino-acid polypeptide reads, in one-letter code: GTPase IMAP family member GIMD1 (217 aa).

Positions 6-217 (KMIINLALFG…ENCYQVLTFK (212 aa)) constitute an AIG1-type G domain. GTP contacts are provided by residues 15–23 (GMTQSGKSS), Ser-36, and 148–150 (HAE).

The protein belongs to the TRAFAC class TrmE-Era-EngA-EngB-Septin-like GTPase superfamily. AIG1/Toc34/Toc159-like paraseptin GTPase family. IAN subfamily.

The chain is GTPase IMAP family member GIMD1 (GIMD1) from Homo sapiens (Human).